We begin with the raw amino-acid sequence, 207 residues long: Ribosomal RNA small subunit methyltransferase G (207 aa).

S-adenosyl-L-methionine-binding positions include Gly-73, Leu-78, 124 to 125 (VE), and Arg-139.

It belongs to the methyltransferase superfamily. RNA methyltransferase RsmG family.

The protein resides in the cytoplasm. It catalyses the reaction guanosine(527) in 16S rRNA + S-adenosyl-L-methionine = N(7)-methylguanosine(527) in 16S rRNA + S-adenosyl-L-homocysteine. Its function is as follows. Specifically methylates the N7 position of guanine in position 527 of 16S rRNA. This Escherichia coli O17:K52:H18 (strain UMN026 / ExPEC) protein is Ribosomal RNA small subunit methyltransferase G.